The following is a 265-amino-acid chain: Diphthine synthase (265 aa).

S-adenosyl-L-methionine is bound by residues Leu-10, Asp-87, Val-90, 115–116 (SI), Leu-166, Ala-209, and His-234.

The protein belongs to the diphthine synthase family. In terms of assembly, homodimer.

The catalysed reaction is 2-[(3S)-amino-3-carboxypropyl]-L-histidyl-[translation elongation factor 2] + 3 S-adenosyl-L-methionine = diphthine-[translation elongation factor 2] + 3 S-adenosyl-L-homocysteine + 3 H(+). Its pathway is protein modification; peptidyl-diphthamide biosynthesis. S-adenosyl-L-methionine-dependent methyltransferase that catalyzes the trimethylation of the amino group of the modified target histidine residue in translation elongation factor 2 (EF-2), to form an intermediate called diphthine. The three successive methylation reactions represent the second step of diphthamide biosynthesis. The chain is Diphthine synthase from Pyrococcus horikoshii (strain ATCC 700860 / DSM 12428 / JCM 9974 / NBRC 100139 / OT-3).